A 329-amino-acid polypeptide reads, in one-letter code: MASQLTDAFARKFYYLRLSITDVCNFRCTYCLPDGYKPSGVTNKGFLTVDEIRRVTRAFASLGTEKVRLTGGEPSLRRDFTDIIAAVRENDAIRQIAVTTNGYRLERDVANWRDAGLTGINVSVDSLDARQFHAITGQDKFNQVMAGIDAAFEAGFEKVKVNTVLMRDVNHHQLDTFLNWIQHRPIQLRFIELMETGEGSELFRKHHISGQVLRDELLRRGWIHQLRQRSDGPAQVFCHPDYAGEIGLIMPYEKDFCATCNRLRVSSIGKLHLCLFGEGGVNLRDLLEDDTQQQALEARISAALREKKQTHFLHQNNTGITQNLSYIGG.

The 227-residue stretch at 8–234 (AFARKFYYLR…QLRQRSDGPA (227 aa)) folds into the Radical SAM core domain. Residue Arg17 coordinates GTP. Residues Cys24 and Cys28 each contribute to the [4Fe-4S] cluster site. Residue Tyr30 participates in S-adenosyl-L-methionine binding. A [4Fe-4S] cluster-binding site is contributed by Cys31. Position 68 (Arg68) interacts with GTP. Gly72 contacts S-adenosyl-L-methionine. Position 99 (Thr99) interacts with GTP. Position 123 (Ser123) interacts with S-adenosyl-L-methionine. Lys160 is a binding site for GTP. Met194 is an S-adenosyl-L-methionine binding site. [4Fe-4S] cluster contacts are provided by Cys257 and Cys260. Residue 262 to 264 (RLR) coordinates GTP. Cys274 serves as a coordination point for [4Fe-4S] cluster.

This sequence belongs to the radical SAM superfamily. MoaA family. As to quaternary structure, monomer and homodimer. [4Fe-4S] cluster is required as a cofactor.

It catalyses the reaction GTP + AH2 + S-adenosyl-L-methionine = (8S)-3',8-cyclo-7,8-dihydroguanosine 5'-triphosphate + 5'-deoxyadenosine + L-methionine + A + H(+). Its pathway is cofactor biosynthesis; molybdopterin biosynthesis. Catalyzes the cyclization of GTP to (8S)-3',8-cyclo-7,8-dihydroguanosine 5'-triphosphate. This chain is GTP 3',8-cyclase, found in Escherichia coli O139:H28 (strain E24377A / ETEC).